Consider the following 146-residue polypeptide: MORN repeat-containing protein 4 (146 aa).

MORN repeat units lie at residues 16 to 38 (YRGE…DGGT), 39 to 61 (YLGH…DGSR), 62 to 84 (YEGE…DNMT), and 85 to 107 (FEGE…DGSH).

As to quaternary structure, interacts with MYO3A.

It is found in the cytoplasm. It localises to the cell projection. The protein localises to the filopodium tip. The protein resides in the stereocilium. Functionally, plays a role in promoting axonal degeneration following neuronal injury by toxic insult or trauma. This is MORN repeat-containing protein 4 (Morn4) from Mus musculus (Mouse).